Reading from the N-terminus, the 152-residue chain is Prefoldin subunit alpha (152 aa).

The segment at 110-152 is disordered; sequence ETQEEVDELESESQELEQQAQQMQQQMQQQQMQQMQQSQGDEE. The segment covering 111–124 has biased composition (acidic residues); the sequence is TQEEVDELESESQE. Residues 125-152 are compositionally biased toward low complexity; sequence LEQQAQQMQQQMQQQQMQQMQQSQGDEE.

It belongs to the prefoldin alpha subunit family. As to quaternary structure, heterohexamer of two alpha and four beta subunits.

The protein localises to the cytoplasm. In terms of biological role, molecular chaperone capable of stabilizing a range of proteins. Seems to fulfill an ATP-independent, HSP70-like function in archaeal de novo protein folding. In Halorubrum lacusprofundi (strain ATCC 49239 / DSM 5036 / JCM 8891 / ACAM 34), this protein is Prefoldin subunit alpha.